A 382-amino-acid polypeptide reads, in one-letter code: S-adenosylmethionine synthase (382 aa).

ATP is bound at residue His16. Asp18 is a binding site for Mg(2+). Residue Glu44 participates in K(+) binding. Residues Glu57 and Gln100 each contribute to the L-methionine site. The segment at 100 to 110 (QSPDIAQGVDN) is flexible loop. ATP contacts are provided by residues 165-167 (DAK), 231-232 (RF), Asp240, 246-247 (RK), and Lys267. Asp240 contacts L-methionine. Residue Lys271 participates in L-methionine binding.

This sequence belongs to the AdoMet synthase family. Homotetramer; dimer of dimers. Mg(2+) serves as cofactor. Requires K(+) as cofactor.

Its subcellular location is the cytoplasm. The enzyme catalyses L-methionine + ATP + H2O = S-adenosyl-L-methionine + phosphate + diphosphate. The protein operates within amino-acid biosynthesis; S-adenosyl-L-methionine biosynthesis; S-adenosyl-L-methionine from L-methionine: step 1/1. Functionally, catalyzes the formation of S-adenosylmethionine (AdoMet) from methionine and ATP. The overall synthetic reaction is composed of two sequential steps, AdoMet formation and the subsequent tripolyphosphate hydrolysis which occurs prior to release of AdoMet from the enzyme. The chain is S-adenosylmethionine synthase from Legionella pneumophila (strain Paris).